A 245-amino-acid chain; its full sequence is Protein-L-isoaspartate O-methyltransferase 1 (245 aa).

Ser76 is an active-site residue.

The protein belongs to the methyltransferase superfamily. L-isoaspartyl/D-aspartyl protein methyltransferase family.

Its subcellular location is the cytoplasm. It carries out the reaction [protein]-L-isoaspartate + S-adenosyl-L-methionine = [protein]-L-isoaspartate alpha-methyl ester + S-adenosyl-L-homocysteine. Its function is as follows. Catalyzes the methyl esterification of L-isoaspartyl residues in peptides and proteins that result from spontaneous decomposition of normal L-aspartyl and L-asparaginyl residues. It plays a role in the repair and/or degradation of damaged proteins. The chain is Protein-L-isoaspartate O-methyltransferase 1 from Rhodopseudomonas palustris (strain HaA2).